The following is a 509-amino-acid chain: MDTETLCLITADSGKVYGILKAIFGDESEIVKKLIDFDVSIRVVPLNLGLLNIFRDNAADLDNADLMKRRFGNTMGSRIVEAYRRSQDSKYKRNVCKTTGLLVCLFGGGLGLSREADKHKKFVEGKSHNILSVEMLKRALSIGGQNVDANKISSFWFATYTIFTTVYSPRLRYQAGSSKRIIALSESRNQYRSNLFWDLRDDSSHEVMSMVHVLSALFASALTAYISTRVRHELTQGNDERESLNNVLVWLKTLTFEPSTIALIAYIWLVSPTDAQATITIGSVMESESSDDFPDIVKILSYTSNTMLPVQLLEDGRTAYCSVADGYTRHTTALTLITDYNSSHMSDKFGVLINIVKFEHAYALHYVHHKPRDGKEMTITSPSSEMMFTSVVVTPLSSYPLIHARNAVIDWLRTFVHMFPDSGSLVIPADSYTWIHNLAQDMFPWVQLSTTLDIRDDHYFQVLCDCLSLGRDSRNHAKVEKLIKYMKASVYNFTSEARGNMLLAITVYK.

The protein resides in the host cell junction. The protein localises to the host plasmodesma. It localises to the host cytoplasm. Transports viral genome to neighboring plant cells directly through plasmosdesmata, without any budding. The movement protein allows efficient cell to cell propagation, by bypassing the host cell wall barrier. This chain is Movement protein, found in Rice dwarf virus (isolate Fujian) (RDV).